We begin with the raw amino-acid sequence, 337 residues long: Peptide methionine sulfoxide reductase MsrA/MsrB (337 aa).

The tract at residues 28 to 181 (KDIYLAGGCF…PGGYCHVDLS (154 aa)) is peptide methionine sulfoxide reductase A. Residue C36 is part of the active site. The MsrB domain occupies 198–321 (KDELKAKLSD…NGASLKFIPL (124 aa)). C310 serves as the catalytic Nucleophile.

In the N-terminal section; belongs to the MsrA Met sulfoxide reductase family. This sequence in the C-terminal section; belongs to the MsrB Met sulfoxide reductase family.

It catalyses the reaction L-methionyl-[protein] + [thioredoxin]-disulfide + H2O = L-methionyl-(S)-S-oxide-[protein] + [thioredoxin]-dithiol. It carries out the reaction [thioredoxin]-disulfide + L-methionine + H2O = L-methionine (S)-S-oxide + [thioredoxin]-dithiol. The catalysed reaction is L-methionyl-[protein] + [thioredoxin]-disulfide + H2O = L-methionyl-(R)-S-oxide-[protein] + [thioredoxin]-dithiol. Its function is as follows. Has an important function as a repair enzyme for proteins that have been inactivated by oxidation. Catalyzes the reversible oxidation-reduction of methionine sulfoxide in proteins to methionine. In Campylobacter fetus, this protein is Peptide methionine sulfoxide reductase MsrA/MsrB (msrAB).